Consider the following 777-residue polypeptide: Disintegrin and metalloproteinase domain-containing protein 5 (777 aa).

The first 16 residues, 1-16, serve as a signal peptide directing secretion; it reads MFLVLVLLTGLGRLYA. A propeptide spanning residues 17–142 is cleaved from the precursor; that stretch reads GNNPRKTFVQ…VLSGFTHMIY (126 aa). Topologically, residues 17–706 are extracellular; it reads GNNPRKTFVQ…RGYVVLSTKR (690 aa). Residues asparagine 49 and asparagine 123 are each glycosylated (N-linked (GlcNAc...) asparagine). The region spanning 185–382 is the Peptidase M12B domain; sequence RYIDMYIVVN…YGLTCLRNTS (198 aa). 4 disulfides stabilise this stretch: cysteine 294–cysteine 377, cysteine 336–cysteine 361, cysteine 338–cysteine 343, and cysteine 456–cysteine 477. Residues 396–485 form the Disintegrin domain; sequence RRICGNSIRE…DCVHDTYAQN (90 aa). The N-linked (GlcNAc...) asparagine glycan is linked to asparagine 566. Positions 633-667 constitute an EGF-like domain; the sequence is NNGSCNAEIHCQGRGICNNLDNCHCHKGFVPPECA. Disulfide bonds link cysteine 637–cysteine 649, cysteine 643–cysteine 655, and cysteine 657–cysteine 666. Residues 707-727 traverse the membrane as a helical segment; sequence FQLIFYIGIPVIIIVAAILIK. Topologically, residues 728–777 are cytoplasmic; sequence QNQLGKLFCRGEKEHMSSVSEDGSRSVTLSATESKFPADTEHSNKEEDAQ. Polar residues predominate over residues 744-760; the sequence is SSVSEDGSRSVTLSATE. Residues 744–777 form a disordered region; sequence SSVSEDGSRSVTLSATESKFPADTEHSNKEEDAQ. Basic and acidic residues predominate over residues 763–777; that stretch reads FPADTEHSNKEEDAQ.

Interacts with TEX101. Post-translationally, subject to proteolytic processing during epididymal transit of spermatozoa. Detected in testis.

Its subcellular location is the membrane. In terms of biological role, this is a non catalytic metalloprotease-like protein. May play a role in sperm-egg fusion. This chain is Disintegrin and metalloproteinase domain-containing protein 5 (ADAM5), found in Cavia porcellus (Guinea pig).